A 303-amino-acid polypeptide reads, in one-letter code: tRNA-cytidine(32) 2-sulfurtransferase (303 aa).

A PP-loop motif motif is present at residues 45-50 (SGGKDS). Cysteine 120, cysteine 123, and cysteine 211 together coordinate [4Fe-4S] cluster.

The protein belongs to the TtcA family. Homodimer. Mg(2+) is required as a cofactor. The cofactor is [4Fe-4S] cluster.

The protein resides in the cytoplasm. The catalysed reaction is cytidine(32) in tRNA + S-sulfanyl-L-cysteinyl-[cysteine desulfurase] + AH2 + ATP = 2-thiocytidine(32) in tRNA + L-cysteinyl-[cysteine desulfurase] + A + AMP + diphosphate + H(+). The protein operates within tRNA modification. Functionally, catalyzes the ATP-dependent 2-thiolation of cytidine in position 32 of tRNA, to form 2-thiocytidine (s(2)C32). The sulfur atoms are provided by the cysteine/cysteine desulfurase (IscS) system. The protein is tRNA-cytidine(32) 2-sulfurtransferase of Methylobacillus flagellatus (strain ATCC 51484 / DSM 6875 / VKM B-1610 / KT).